Here is a 404-residue protein sequence, read N- to C-terminus: Cysteine desulfurase IscS (404 aa).

Residues 75–76 (AT), Asn-155, Gln-183, and 203–205 (SAH) contribute to the pyridoxal 5'-phosphate site. Lys-206 bears the N6-(pyridoxal phosphate)lysine mark. Thr-243 provides a ligand contact to pyridoxal 5'-phosphate. Residue Cys-328 is the Cysteine persulfide intermediate of the active site. Residue Cys-328 coordinates [2Fe-2S] cluster.

The protein belongs to the class-V pyridoxal-phosphate-dependent aminotransferase family. NifS/IscS subfamily. As to quaternary structure, homodimer. Forms a heterotetramer with IscU, interacts with other sulfur acceptors. Pyridoxal 5'-phosphate serves as cofactor.

It is found in the cytoplasm. It carries out the reaction (sulfur carrier)-H + L-cysteine = (sulfur carrier)-SH + L-alanine. It functions in the pathway cofactor biosynthesis; iron-sulfur cluster biosynthesis. Its function is as follows. Master enzyme that delivers sulfur to a number of partners involved in Fe-S cluster assembly, tRNA modification or cofactor biosynthesis. Catalyzes the removal of elemental sulfur atoms from cysteine to produce alanine. Functions as a sulfur delivery protein for Fe-S cluster synthesis onto IscU, an Fe-S scaffold assembly protein, as well as other S acceptor proteins. The polypeptide is Cysteine desulfurase IscS (Shewanella woodyi (strain ATCC 51908 / MS32)).